The primary structure comprises 119 residues: Probable prefoldin subunit 6 (119 aa).

It belongs to the prefoldin subunit beta family. In terms of assembly, heterohexamer of two PFD-alpha type and four PFD-beta type subunits. May interact with MSP1.

Its function is as follows. Binds specifically to cytosolic chaperonin (c-CPN) and transfers target proteins to it. Binds to nascent polypeptide chain and promotes folding in an environment in which there are many competing pathways for nonnative proteins. This is Probable prefoldin subunit 6 from Plasmodium falciparum (isolate 3D7).